Here is a 64-residue protein sequence, read N- to C-terminus: Putative neurotoxin-G (64 aa).

The signal sequence occupies residues 1–19 (MFAMVTVTVLLLISSGIFC). Cystine bridges form between Cys-25-Cys-45, Cys-32-Cys-54, and Cys-36-Cys-56.

In terms of tissue distribution, expressed by the venom gland.

It is found in the secreted. The polypeptide is Putative neurotoxin-G (Lychas mucronatus (Chinese swimming scorpion)).